The sequence spans 564 residues: Membrane protein insertase YidC (564 aa).

Residues 7–24 form a helical membrane-spanning segment; the sequence is VLWVVFSFSLLMLWDNYN. Low complexity predominate over residues 43–60; it reads KPAAATDDGKTAAAPTAD. The segment at 43–76 is disordered; it reads KPAAATDDGKTAAAPTADVPTSSAHAANATGVPD. Helical transmembrane passes span 293-313, 341-361, 364-384, 438-458, 483-503, and 524-544; these read LATN…APGA, VKDY…MIQI, LLGN…LAFF, MPIV…LASV, IGSF…SMFI, and PIAF…YWVV.

Belongs to the OXA1/ALB3/YidC family. Type 1 subfamily. Interacts with the Sec translocase complex via SecD. Specifically interacts with transmembrane segments of nascent integral membrane proteins during membrane integration.

It is found in the cell inner membrane. Required for the insertion and/or proper folding and/or complex formation of integral membrane proteins into the membrane. Involved in integration of membrane proteins that insert both dependently and independently of the Sec translocase complex, as well as at least some lipoproteins. Aids folding of multispanning membrane proteins. The chain is Membrane protein insertase YidC from Janthinobacterium sp. (strain Marseille) (Minibacterium massiliensis).